The primary structure comprises 112 residues: MSTNIYDIANELERAIRNLPEYKAVEAVKVSVEGNSEAKEILESYISFQKEIQSKLQAGEIPTEADQKKMLDFNKKVQGNPLLTEYFSKQQQLGTYVADLERIIFKPLNELL.

Belongs to the UPF0342 family.

The chain is UPF0342 protein SSU05_1260 from Streptococcus suis (strain 05ZYH33).